The primary structure comprises 648 residues: MRNDIADPEGPPRKGRLREEGMAALTLGALGVVFGDIGTSPIYAFREALGQAAEDGIVAGEILGVLSLALWALILVVTCKYVLFLMRADNNGEGGVLALMTLAQRSTRRRRTLVMALGAIGAALFYGDGVITPALSVLSAVEGLKTIPGLEHSVSRGEILLITSAILIGLFLMQARGTRIVGRLFGPVCLVWFVTIGGIGLIHIADQPAILAALLPHNGVLFMANHGVAGMFVMGAVFLTVTGAEALTADMGHFGAKPIRTGWLAIVFPALALNYLGQGAFALHRLEVASARGVEFVNQDWFFLMAPGLARIPLVILATCATVIASQAVITGAYSLTRQAIQLGLLPRLKIRQTSEHAAGQIYLPTITMLLFVGVMVLVLGFGSSSAMAAAYGVSVSGTMVVTTCLAFLVVRRSWGWGWPLTVAVIVPLLLLDLFFFGANILRIYEGGWVPLIVAGGVGLLIVTWVRGRKLLLAIDQSQAIELEELARMLRARPPERVPGMAIFLSSGMEAAPSALLHNLKHNKILHERNLALTINTVNQPAVPAAQRLDMTNIDENFTRAVLNYGFMESPDIPRDLAFALRHGDNKLEPMQTSYFIGRSTLRPSKHSGMPFWQDLLFIFLYRNASDPTDFFRIPPNRVVELGSQTTI.

12 consecutive transmembrane segments (helical) span residues Leu25–Phe45, Ile57–Val77, Leu113–Pro133, Ser153–Met173, Leu184–Ile204, Gly219–Leu239, Trp263–Leu283, Ile312–Gly332, Ile362–Phe382, Ala391–Val411, Trp417–Phe437, and Glu446–Val466.

The protein belongs to the HAK/KUP transporter (TC 2.A.72) family.

The protein localises to the cell inner membrane. The catalysed reaction is K(+)(in) + H(+)(in) = K(+)(out) + H(+)(out). Functionally, transport of potassium into the cell. Likely operates as a K(+):H(+) symporter. The protein is Probable potassium transport system protein Kup 1 of Rhizorhabdus wittichii (strain DSM 6014 / CCUG 31198 / JCM 15750 / NBRC 105917 / EY 4224 / RW1) (Sphingomonas wittichii).